The chain runs to 91 residues: Small ribosomal subunit protein uS19 (91 aa).

It belongs to the universal ribosomal protein uS19 family.

In terms of biological role, protein S19 forms a complex with S13 that binds strongly to the 16S ribosomal RNA. The polypeptide is Small ribosomal subunit protein uS19 (Dechloromonas aromatica (strain RCB)).